We begin with the raw amino-acid sequence, 473 residues long: MKTLYSLRRFYPVETLFNGTLALAGRDQETTGFAWWAGNARLINLSGKLLGAHVAHAGLIVFWAGGMNLFEVAHFVPEKPMYEQGLILLPHLATLGWGVGPGGEVIDTFPYFVSGVLHLISSAVLGFGGIYHALLGPETLEESFPFFGYVWKDRNKMTTILGIHLILLGIGAFLLVFKALYFGGVYDTWAPGGGDVRKITNLTLSPSIIFGYLLKSPFGGEGWIVSVDDLEDIIGGHVWLGSICILGGIWHILTKPFAWARRALVWSGEAYLSYSLGALSVFGFIACCFVWFNNTAYPSEFYGPTGPEASQAQAFTFLVRDQRLGANVGSAQGPTGLGKYLMRSPTGEVIFGGETMRFWDLRAPWLEPLRGPNGLDLSRLKKDIQPWQERRSAEYMTHAPLGSLNSVGGVATEINAVNYVSPRSWLATSHFVLGFFLFVGHLWHAGRARAAAAGFEKGIDRDFEPVLSMTPLN.

The propeptide occupies 1-14; sequence MKTLYSLRRFYPVE. Position 15 is an N-acetylthreonine (T15). T15 carries the phosphothreonine modification. Transmembrane regions (helical) follow at residues 69-93, 134-155, 178-200, 255-275, and 291-312; these read LFEVAHFVPEKPMYEQGLILLPHLA, LLGPETLEESFPFFGYVWKDRN, KALYFGGVYDTWAPGGGDVRKIT, KPFAWARRALVWSGEAYLSYS, and WFNNTAYPSEFYGPTGPEASQA. E367 contributes to the [CaMn4O5] cluster binding site. Residues 447–471 traverse the membrane as a helical segment; the sequence is RARAAAAGFEKGIDRDFEPVLSMTP.

The protein belongs to the PsbB/PsbC family. PsbC subfamily. PSII is composed of 1 copy each of membrane proteins PsbA, PsbB, PsbC, PsbD, PsbE, PsbF, PsbH, PsbI, PsbJ, PsbK, PsbL, PsbM, PsbT, PsbX, PsbY, PsbZ, Psb30/Ycf12, at least 3 peripheral proteins of the oxygen-evolving complex and a large number of cofactors. It forms dimeric complexes. It depends on Binds multiple chlorophylls and provides some of the ligands for the Ca-4Mn-5O cluster of the oxygen-evolving complex. It may also provide a ligand for a Cl- that is required for oxygen evolution. PSII binds additional chlorophylls, carotenoids and specific lipids. as a cofactor.

The protein localises to the plastid. It is found in the chloroplast thylakoid membrane. Its function is as follows. One of the components of the core complex of photosystem II (PSII). It binds chlorophyll and helps catalyze the primary light-induced photochemical processes of PSII. PSII is a light-driven water:plastoquinone oxidoreductase, using light energy to abstract electrons from H(2)O, generating O(2) and a proton gradient subsequently used for ATP formation. The polypeptide is Photosystem II CP43 reaction center protein (Panax ginseng (Korean ginseng)).